Reading from the N-terminus, the 491-residue chain is Glutamyl-tRNA(Gln) amidotransferase subunit A (491 aa).

Catalysis depends on charge relay system residues K76 and S154. Residue S178 is the Acyl-ester intermediate of the active site.

It belongs to the amidase family. GatA subfamily. As to quaternary structure, heterotrimer of A, B and C subunits.

The enzyme catalyses L-glutamyl-tRNA(Gln) + L-glutamine + ATP + H2O = L-glutaminyl-tRNA(Gln) + L-glutamate + ADP + phosphate + H(+). In terms of biological role, allows the formation of correctly charged Gln-tRNA(Gln) through the transamidation of misacylated Glu-tRNA(Gln) in organisms which lack glutaminyl-tRNA synthetase. The reaction takes place in the presence of glutamine and ATP through an activated gamma-phospho-Glu-tRNA(Gln). The chain is Glutamyl-tRNA(Gln) amidotransferase subunit A from Cereibacter sphaeroides (strain ATCC 17029 / ATH 2.4.9) (Rhodobacter sphaeroides).